The chain runs to 65 residues: Large ribosomal subunit protein bL35 (65 aa).

Positions 1-26 (MPKIKTHRGAAKRFSKTGTGKIKRSH) are enriched in basic residues. The interval 1-41 (MPKIKTHRGAAKRFSKTGTGKIKRSHAFTSHILTSKTRKNK) is disordered.

This sequence belongs to the bacterial ribosomal protein bL35 family.

The protein is Large ribosomal subunit protein bL35 of Geotalea daltonii (strain DSM 22248 / JCM 15807 / FRC-32) (Geobacter daltonii).